Reading from the N-terminus, the 173-residue chain is Large ribosomal subunit protein uL5 (173 aa).

This sequence belongs to the universal ribosomal protein uL5 family. Part of the 50S ribosomal subunit; contacts the 5S rRNA and probably tRNA. Forms a bridge to the 30S subunit in the 70S ribosome.

Functionally, this is one of the proteins that bind and probably mediate the attachment of the 5S RNA into the large ribosomal subunit, where it forms part of the central protuberance. In the 70S ribosome it contacts protein S13 of the 30S subunit (bridge B1b), connecting the 2 subunits; this bridge is implicated in subunit movement. May contact the P site tRNA; the 5S rRNA and some of its associated proteins might help stabilize positioning of ribosome-bound tRNAs. The protein is Large ribosomal subunit protein uL5 of Nitrosopumilus maritimus (strain SCM1).